The chain runs to 282 residues: TPR repeat protein oca3 (282 aa).

TPR repeat units lie at residues 16-50 (IVALFSQQEAYAKLGKYKDEIWDVYQKVFIAALTT), 71-104 (PRVEGLYGMFLEATASEKDAMSYYNSKLSEDPTH), 139-172 (LEAWAELADIYVSVEAFESAIFCYEEMVLLQPFE), and 174-211 (RLFARLGDLYFVLAQSNATNYWFSLKHYCRSVEICEEY).

It localises to the cytoplasm. It is found in the nucleus. Functionally, may be involved in cell cycle regulation. The chain is TPR repeat protein oca3 (oca3) from Schizosaccharomyces pombe (strain 972 / ATCC 24843) (Fission yeast).